Consider the following 268-residue polypeptide: Undecaprenyl-diphosphatase (268 aa).

7 consecutive transmembrane segments (helical) span residues 5–25, 43–63, 84–104, 107–127, 184–204, 213–233, and 248–268; these read SIISALVLGLIEGLTEFIPVS, GNTFAVLIQLGAILAILLVYF, FSVLLAFLPAALIGAAAHGFI, VLFETPMLICVVLIVGGIILY, AAEFSFFLAMPTMVGAFALDL, FDDVGLIAAGFIAAFIAGIFV, and PFAIWRILVGTAGLVGLWLLG.

It belongs to the UppP family.

It localises to the cell inner membrane. The catalysed reaction is di-trans,octa-cis-undecaprenyl diphosphate + H2O = di-trans,octa-cis-undecaprenyl phosphate + phosphate + H(+). Its function is as follows. Catalyzes the dephosphorylation of undecaprenyl diphosphate (UPP). Confers resistance to bacitracin. The sequence is that of Undecaprenyl-diphosphatase from Rhizobium meliloti (strain 1021) (Ensifer meliloti).